The sequence spans 691 residues: Protein phosphatase 1 regulatory subunit 37 (691 aa).

Residues 1 to 43 are disordered; sequence MEIAPQEAPPVPGADGDIEEAPAEAGSPSPASPPADGRLKAAA. S50 and S56 each carry phosphoserine. LRR repeat units lie at residues 220–240, 248–269, 277–297, 306–326, and 334–354; these read SLAVLHLENASLSGRPLMLLA, NLRELYLADNKLNGLQDSAQLG, SLQILDLRNNHVLDSGLAYIC, GLVTLVLWNNQLTHTGMAFLG, and SLETLNLGHNPIGNEGVRHLK. Residues 460–662 form a disordered region; sequence EREEKEQPPQ…PEVKGGSCGL (203 aa). A compositionally biased stretch (polar residues) spans 468 to 481; the sequence is PQLSASMPETTATE. Acidic residues predominate over residues 505 to 523; sequence SDSDSDSDGEEEEEEEGER. A Phosphoserine modification is found at S561. Composition is skewed to pro residues over residues 584–605 and 620–634; these read PASPTPPSPPPPPSPPASPSLP and PQPPPEPPRSGPPLP.

This sequence belongs to the PPP1R37 family. In terms of assembly, interacts with PPP1CA.

Inhibits phosphatase activity of protein phosphatase 1 (PP1) complexes. In Homo sapiens (Human), this protein is Protein phosphatase 1 regulatory subunit 37 (PPP1R37).